The chain runs to 55 residues: ATP synthase F(0) complex subunit 8 (55 aa).

The chain crosses the membrane as a helical span at residues 9-29 (WFAIMVFSWFVFLIFLPPKIM).

This sequence belongs to the ATPase protein 8 family. In terms of assembly, component of the ATP synthase complex composed at least of ATP5F1A/subunit alpha, ATP5F1B/subunit beta, ATP5MC1/subunit c (homooctomer), MT-ATP6/subunit a, MT-ATP8/subunit 8, ATP5ME/subunit e, ATP5MF/subunit f, ATP5MG/subunit g, ATP5MK/subunit k, ATP5MJ/subunit j, ATP5F1C/subunit gamma, ATP5F1D/subunit delta, ATP5F1E/subunit epsilon, ATP5PF/subunit F6, ATP5PB/subunit b, ATP5PD/subunit d, ATP5PO/subunit OSCP. ATP synthase complex consists of a soluble F(1) head domain (subunits alpha(3) and beta(3)) - the catalytic core - and a membrane F(0) domain - the membrane proton channel (subunits c, a, 8, e, f, g, k and j). These two domains are linked by a central stalk (subunits gamma, delta, and epsilon) rotating inside the F1 region and a stationary peripheral stalk (subunits F6, b, d, and OSCP).

The protein resides in the mitochondrion membrane. Functionally, subunit 8, of the mitochondrial membrane ATP synthase complex (F(1)F(0) ATP synthase or Complex V) that produces ATP from ADP in the presence of a proton gradient across the membrane which is generated by electron transport complexes of the respiratory chain. ATP synthase complex consist of a soluble F(1) head domain - the catalytic core - and a membrane F(1) domain - the membrane proton channel. These two domains are linked by a central stalk rotating inside the F(1) region and a stationary peripheral stalk. During catalysis, ATP synthesis in the catalytic domain of F(1) is coupled via a rotary mechanism of the central stalk subunits to proton translocation. In vivo, can only synthesize ATP although its ATP hydrolase activity can be activated artificially in vitro. Part of the complex F(0) domain. This Tetraodon nigroviridis (Spotted green pufferfish) protein is ATP synthase F(0) complex subunit 8.